A 470-amino-acid polypeptide reads, in one-letter code: Glutamate--tRNA ligase (470 aa).

The 'HIGH' region signature appears at 9–19; sequence PSPTGFLHVGG. The 'KMSKS' region signature appears at 236 to 240; it reads RLSKR. Position 239 (Lys-239) interacts with ATP.

The protein belongs to the class-I aminoacyl-tRNA synthetase family. Glutamate--tRNA ligase type 1 subfamily. As to quaternary structure, monomer.

It localises to the cytoplasm. It catalyses the reaction tRNA(Glu) + L-glutamate + ATP = L-glutamyl-tRNA(Glu) + AMP + diphosphate. In terms of biological role, catalyzes the attachment of glutamate to tRNA(Glu) in a two-step reaction: glutamate is first activated by ATP to form Glu-AMP and then transferred to the acceptor end of tRNA(Glu). This chain is Glutamate--tRNA ligase, found in Legionella pneumophila (strain Corby).